Consider the following 114-residue polypeptide: Large ribosomal subunit protein bL20c (114 aa).

The protein belongs to the bacterial ribosomal protein bL20 family.

It localises to the plastid. It is found in the chloroplast. In terms of biological role, binds directly to 23S ribosomal RNA and is necessary for the in vitro assembly process of the 50S ribosomal subunit. It is not involved in the protein synthesizing functions of that subunit. The polypeptide is Large ribosomal subunit protein bL20c (rpl20) (Trieres chinensis (Marine centric diatom)).